The chain runs to 253 residues: Phosphoadenosine 5'-phosphosulfate reductase (253 aa).

Cys-239 acts as the Nucleophile; cysteine thiosulfonate intermediate in catalysis.

It belongs to the PAPS reductase family. CysH subfamily.

Its subcellular location is the cytoplasm. It catalyses the reaction [thioredoxin]-disulfide + sulfite + adenosine 3',5'-bisphosphate + 2 H(+) = [thioredoxin]-dithiol + 3'-phosphoadenylyl sulfate. The protein operates within sulfur metabolism; hydrogen sulfide biosynthesis; sulfite from sulfate: step 3/3. Functionally, catalyzes the formation of sulfite from phosphoadenosine 5'-phosphosulfate (PAPS) using thioredoxin as an electron donor. The protein is Phosphoadenosine 5'-phosphosulfate reductase of Photobacterium profundum (strain SS9).